The primary structure comprises 304 residues: Nucleotide-binding protein ROP_69550 (304 aa).

24–31 (GLSGAGLQ) contributes to the ATP binding site. Position 75-78 (75-78 (DVRS)) interacts with GTP.

This sequence belongs to the RapZ-like family.

Its function is as follows. Displays ATPase and GTPase activities. This Rhodococcus opacus (strain B4) protein is Nucleotide-binding protein ROP_69550.